A 279-amino-acid polypeptide reads, in one-letter code: Acetyl-coenzyme A carboxylase carboxyl transferase subunit beta (279 aa).

The CoA carboxyltransferase N-terminal domain occupies 23 to 279 (LWWKCEECGA…IVRLAGMLKV (257 aa)). Zn(2+)-binding residues include Cys27, Cys30, Cys46, and Cys49. The segment at 27-49 (CEECGAMIHKKQLEDHVYTCSDC) adopts a C4-type zinc-finger fold.

Belongs to the AccD/PCCB family. As to quaternary structure, acetyl-CoA carboxylase is a heterohexamer composed of biotin carboxyl carrier protein (AccB), biotin carboxylase (AccC) and two subunits each of ACCase subunit alpha (AccA) and ACCase subunit beta (AccD). Zn(2+) is required as a cofactor.

The protein resides in the cytoplasm. It carries out the reaction N(6)-carboxybiotinyl-L-lysyl-[protein] + acetyl-CoA = N(6)-biotinyl-L-lysyl-[protein] + malonyl-CoA. Its pathway is lipid metabolism; malonyl-CoA biosynthesis; malonyl-CoA from acetyl-CoA: step 1/1. In terms of biological role, component of the acetyl coenzyme A carboxylase (ACC) complex. Biotin carboxylase (BC) catalyzes the carboxylation of biotin on its carrier protein (BCCP) and then the CO(2) group is transferred by the transcarboxylase to acetyl-CoA to form malonyl-CoA. This Chlorobium limicola (strain DSM 245 / NBRC 103803 / 6330) protein is Acetyl-coenzyme A carboxylase carboxyl transferase subunit beta.